Consider the following 390-residue polypeptide: Putative nickel insertion protein (390 aa).

The protein belongs to the LarC family.

This chain is Putative nickel insertion protein, found in Geobacter metallireducens (strain ATCC 53774 / DSM 7210 / GS-15).